The chain runs to 210 residues: Ribosomal RNA large subunit methyltransferase E (210 aa).

S-adenosyl-L-methionine-binding residues include glycine 61, tryptophan 63, aspartate 81, aspartate 97, and aspartate 122. Lysine 162 serves as the catalytic Proton acceptor. The segment covering 187–196 has biased composition (basic and acidic residues); that stretch reads KPEASRKRSP. The segment at 187-210 is disordered; that stretch reads KPEASRKRSPEVYALGQGKRAHMK.

The protein belongs to the class I-like SAM-binding methyltransferase superfamily. RNA methyltransferase RlmE family.

It is found in the cytoplasm. It carries out the reaction uridine(2552) in 23S rRNA + S-adenosyl-L-methionine = 2'-O-methyluridine(2552) in 23S rRNA + S-adenosyl-L-homocysteine + H(+). Functionally, specifically methylates the uridine in position 2552 of 23S rRNA at the 2'-O position of the ribose in the fully assembled 50S ribosomal subunit. This is Ribosomal RNA large subunit methyltransferase E from Stenotrophomonas maltophilia (strain R551-3).